Reading from the N-terminus, the 686-residue chain is Methionine--tRNA ligase (686 aa).

The 'HIGH' region motif lies at 15 to 25; it reads PYANGSIHLGH. Residues C146, C149, C159, and C162 each coordinate Zn(2+). The short motif at 332 to 336 is the 'KMSKS' region element; the sequence is KMSKS. K335 contributes to the ATP binding site. The tract at residues 550–571 is disordered; that stretch reads AAAEAAAKEKAEAEKEQASQTE. The region spanning 585–686 is the tRNA-binding domain; sequence AFSAVDMRIA…EGAQPGMRVM (102 aa).

Belongs to the class-I aminoacyl-tRNA synthetase family. MetG type 1 subfamily. Homodimer. The cofactor is Zn(2+).

The protein localises to the cytoplasm. It catalyses the reaction tRNA(Met) + L-methionine + ATP = L-methionyl-tRNA(Met) + AMP + diphosphate. Functionally, is required not only for elongation of protein synthesis but also for the initiation of all mRNA translation through initiator tRNA(fMet) aminoacylation. This chain is Methionine--tRNA ligase, found in Vibrio atlanticus (strain LGP32) (Vibrio splendidus (strain Mel32)).